Reading from the N-terminus, the 208-residue chain is Small ribosomal subunit protein uS4 (208 aa).

The interval 31-51 (SALDKRAYGPGQHGQRRAKTS) is disordered. The 63-residue stretch at 98–160 (RRLDNVVYRM…TKSNSQVVRA (63 aa)) folds into the S4 RNA-binding domain.

Belongs to the universal ribosomal protein uS4 family. In terms of assembly, part of the 30S ribosomal subunit. Contacts protein S5. The interaction surface between S4 and S5 is involved in control of translational fidelity.

In terms of biological role, one of the primary rRNA binding proteins, it binds directly to 16S rRNA where it nucleates assembly of the body of the 30S subunit. With S5 and S12 plays an important role in translational accuracy. This is Small ribosomal subunit protein uS4 from Helicobacter pylori (strain ATCC 700392 / 26695) (Campylobacter pylori).